Reading from the N-terminus, the 493-residue chain is Aminotransferase swnA (493 aa).

It belongs to the class-I pyridoxal-phosphate-dependent aminotransferase family. Requires pyridoxal 5'-phosphate as cofactor.

The protein operates within mycotoxin biosynthesis. In terms of biological role, aminotransferase; part of the gene cluster that mediates the biosynthesis of swainsonine (SW), a cytotoxic fungal alkaloid and a potential cancer therapy drug. Swainsonine production occurs via a multibranched pathway and is dispensable for fungal colonization of plants and infection of insect hosts. The first step of swainsonine biosynthesis is the production of the precursor pipecolic acid (PA) via conversion of L-lysine (Lys) to 1-piperideine-6-carboxylate (P6C) by the aminotransferase swnA, the latter being further reduced to PA by the reductase swnR. The PKS-NRPS hybrid synthetase swnK uptakes and condensates PA and malonyl-CoA with and without skipping of the ketoreductase (KR) domain in order to produce 3 intermediates, 1-oxoindolizidine, (1S)-1-hydroxyindolizin, and (1R)-1-hydroxyindolizine; with the transisomer (1S)-1-hydroxyindolizin being predominant. The terminal thioester reductase (TE) domain of swnK is involved in reduction of the thioester bond to release the intermediate aldehydes. The oxidoreductase swnN could contribute to the reduction of 1-oxoindolizidine to (1S)-1-hydroxyindolizin and (1R)-1-hydroxyindolizine, contributing to the major route of SW production. The dioxygenase swnH2 would be responsible for the oxidization of (1R)-1-hydroxyindolizine into (1R,2S)-1,2-dihydroxyindolizine and of (1S)-1-hydroxyindolizin to yield both (1R,2S)-1,2-dihydroxyindolizine and (1S,2S)-1,2-dihydroxyindolizine. The dioxygenase swnH1 then performs the conversion of the 1,2-dihydroxyindolizine epimers to SW. The chain is Aminotransferase swnA from Arthroderma benhamiae (strain ATCC MYA-4681 / CBS 112371) (Trichophyton mentagrophytes).